The primary structure comprises 248 residues: PF03932 family protein CutC (248 aa).

It belongs to the CutC family. Homodimer.

The protein localises to the cytoplasm. The sequence is that of PF03932 family protein CutC from Escherichia coli O81 (strain ED1a).